The primary structure comprises 494 residues: Probable malate:quinone oxidoreductase (494 aa).

It belongs to the MQO family. FAD serves as cofactor.

The enzyme catalyses (S)-malate + a quinone = a quinol + oxaloacetate. It participates in carbohydrate metabolism; tricarboxylic acid cycle; oxaloacetate from (S)-malate (quinone route): step 1/1. The polypeptide is Probable malate:quinone oxidoreductase (Micrococcus luteus (strain ATCC 4698 / DSM 20030 / JCM 1464 / CCM 169 / CCUG 5858 / IAM 1056 / NBRC 3333 / NCIMB 9278 / NCTC 2665 / VKM Ac-2230) (Micrococcus lysodeikticus)).